A 264-amino-acid chain; its full sequence is Apolipoprotein A-I (264 aa).

The N-terminal stretch at 1–18 (MKAVVLAVALVFLTGSQA) is a signal peptide. 2 repeat units span residues 67–88 (LNLL…ERLG) and 89–110 (PLTR…QEMN). Residues 67–264 (LNLLENWDTL…DKARETLTAQ (198 aa)) form a 10 X approximate tandem repeats region. M109 is modified (methionine sulfoxide). The 3; half-length repeat unit spans residues 111–121 (KDLEEVKQNVQ). Repeat copies occupy residues 122 to 143 (PYLD…QRVA), 144 to 165 (PLGA…GKLS), and 166 to 187 (PVAE…TQLA). The stretch at 188–207 (PHSDKLRESLAQRLAELKSN) is one 7; truncated repeat. Residues 208 to 229 (PTLNEYHTRAKTHLNTFGEKAR) form repeat 8. Residues 230-240 (PALEDLRHTLI) form a 9; half-length repeat. Copy 10 of the repeat occupies 241 to 264 (PILDTLKTKVKSVIDKARETLTAQ).

This sequence belongs to the apolipoprotein A1/A4/E family. Homodimer. Interacts with APOA1BP and CLU. Component of a sperm activating protein complex (SPAP), consisting of APOA1, an immunoglobulin heavy chain, an immunoglobulin light chain and albumin. Interacts with NDRG1. Interacts with SCGB3A2. Interacts with NAXE and YJEFN3. Post-translationally, glycosylated. Palmitoylated. In terms of processing, phosphorylation sites are present in the extracellular medium.

The protein resides in the secreted. Participates in the reverse transport of cholesterol from tissues to the liver for excretion by promoting cholesterol efflux from tissues and by acting as a cofactor for the lecithin cholesterol acyltransferase (LCAT). As part of the SPAP complex, activates spermatozoa motility. This is Apolipoprotein A-I (Apoa1) from Mus pahari (Gairdner's shrew-mouse).